A 247-amino-acid chain; its full sequence is Dihydroorotate dehydrogenase B (NAD(+)), electron transfer subunit (247 aa).

The FAD-binding FR-type domain occupies 2–96 (RWKMKARVLS…TGPHGNGFEI (95 aa)). Residues 49–52 (RPFS), 64–66 (LYQ), and 71–72 (GT) contribute to the FAD site. Residues cysteine 210, cysteine 215, cysteine 218, and cysteine 234 each contribute to the [2Fe-2S] cluster site.

The protein belongs to the PyrK family. Heterotetramer of 2 PyrK and 2 PyrD type B subunits. Requires [2Fe-2S] cluster as cofactor. It depends on FAD as a cofactor.

Its pathway is pyrimidine metabolism; UMP biosynthesis via de novo pathway; orotate from (S)-dihydroorotate (NAD(+) route): step 1/1. Responsible for channeling the electrons from the oxidation of dihydroorotate from the FMN redox center in the PyrD type B subunit to the ultimate electron acceptor NAD(+). The polypeptide is Dihydroorotate dehydrogenase B (NAD(+)), electron transfer subunit (Caldanaerobacter subterraneus subsp. tengcongensis (strain DSM 15242 / JCM 11007 / NBRC 100824 / MB4) (Thermoanaerobacter tengcongensis)).